Consider the following 445-residue polypeptide: MTVKYSINELLVDHESLSDNFTCPICFDLYYSSSSKKEVFQCRDGHLACKSCWSDSLLNKKECMICRTPVNSMNELSRNRFIENEFLKKKVYCPNSFFFIENVNVDDSSMNEALIRDESNGCKEIITVEALEKHQVECQFRFEKCPFTGCDKILRLKQIAEHKIDCKFSSKYCLHCDKEIPGQLDAHALVCPKVRIQCTQSESCKKSFPREQLRLHIDQDCKFTIVKCKYCCLNNSKNESIDFKRFELADHYEKVNHSFEMDKVINNQQLELVECKNQIYQINNKYEKLLERVIKLEQLSMDASNKLSLLPRFKNSIIFATFSTHKLKRVNEGISTVPLDVGNNKFKLTLYPNGYDESNKGNISAYLYRVSINEPAVKVSFTFVFNNQDSRKNRTYRIQEYTFNGGATSGWGYPKTLKTVDVDSANGWLTDEDKLVIGLRIQVLP.

The RING-type; degenerate zinc finger occupies Cys-23 to Arg-67. 2 TRAF-type zinc fingers span residues Lys-133 to Ala-186 and Ala-186 to Asp-242. A coiled-coil region spans residues Gln-269–Leu-307. One can recognise an MATH domain in the interval Lys-314 to Ile-441.

It belongs to the TNF receptor-associated factor family. A subfamily.

Its subcellular location is the cytoplasm. Probable adapter protein and signal transducer that links members of the tumor necrosis factor receptor family to different signaling pathways by association with the receptor cytoplasmic domain and kinases. The sequence is that of TNF receptor-associated factor family protein DDB_G0290971 from Dictyostelium discoideum (Social amoeba).